The chain runs to 373 residues: 3-isopropylmalate dehydrogenase (373 aa).

82 to 93 is an NAD(+) binding site; it reads GPKWGTGTVRPE. Arg100, Arg110, Arg139, and Asp231 together coordinate substrate. Residues Asp231, Asp256, and Asp260 each coordinate Mg(2+). 295–306 lines the NAD(+) pocket; sequence GSAPDLPANKVN.

This sequence belongs to the isocitrate and isopropylmalate dehydrogenases family. As to quaternary structure, homodimer. Mg(2+) is required as a cofactor. The cofactor is Mn(2+).

The protein resides in the cytoplasm. The catalysed reaction is (2R,3S)-3-isopropylmalate + NAD(+) = 4-methyl-2-oxopentanoate + CO2 + NADH. Its pathway is amino-acid biosynthesis; L-leucine biosynthesis; L-leucine from 3-methyl-2-oxobutanoate: step 3/4. In terms of biological role, catalyzes the oxidation of 3-carboxy-2-hydroxy-4-methylpentanoate (3-isopropylmalate) to 3-carboxy-4-methyl-2-oxopentanoate. The product decarboxylates to 4-methyl-2 oxopentanoate. The polypeptide is 3-isopropylmalate dehydrogenase (LEU2) (Candida albicans (Yeast)).